Consider the following 404-residue polypeptide: Probable tRNA sulfurtransferase (404 aa).

Positions 61-166 constitute a THUMP domain; the sequence is EAVSERLKDV…SGYSYIMCDE (106 aa). ATP contacts are provided by residues 184–185, 209–210, arginine 266, glycine 288, and glutamine 297; these read LL and HF.

This sequence belongs to the ThiI family.

It localises to the cytoplasm. The enzyme catalyses [ThiI sulfur-carrier protein]-S-sulfanyl-L-cysteine + a uridine in tRNA + 2 reduced [2Fe-2S]-[ferredoxin] + ATP + H(+) = [ThiI sulfur-carrier protein]-L-cysteine + a 4-thiouridine in tRNA + 2 oxidized [2Fe-2S]-[ferredoxin] + AMP + diphosphate. The catalysed reaction is [ThiS sulfur-carrier protein]-C-terminal Gly-Gly-AMP + S-sulfanyl-L-cysteinyl-[cysteine desulfurase] + AH2 = [ThiS sulfur-carrier protein]-C-terminal-Gly-aminoethanethioate + L-cysteinyl-[cysteine desulfurase] + A + AMP + 2 H(+). The protein operates within cofactor biosynthesis; thiamine diphosphate biosynthesis. Functionally, catalyzes the ATP-dependent transfer of a sulfur to tRNA to produce 4-thiouridine in position 8 of tRNAs, which functions as a near-UV photosensor. Also catalyzes the transfer of sulfur to the sulfur carrier protein ThiS, forming ThiS-thiocarboxylate. This is a step in the synthesis of thiazole, in the thiamine biosynthesis pathway. The sulfur is donated as persulfide by IscS. The sequence is that of Probable tRNA sulfurtransferase from Bacillus cereus (strain ATCC 14579 / DSM 31 / CCUG 7414 / JCM 2152 / NBRC 15305 / NCIMB 9373 / NCTC 2599 / NRRL B-3711).